The chain runs to 515 residues: Tabersonine 6,7-epoxidase isoform 2 (515 aa).

A helical transmembrane segment spans residues 1–21 (MEFVVSPFAFLIFFFILLKMI). Residues Asn-173, Asn-259, and Asn-352 are each glycosylated (N-linked (GlcNAc...) asparagine). Cys-449 contributes to the heme binding site.

It belongs to the cytochrome P450 family. Heme serves as cofactor. Mainly expressed in aerial organs, including stems, leaves and flowers.

The protein localises to the endoplasmic reticulum membrane. The catalysed reaction is (-)-tabersonine + reduced [NADPH--hemoprotein reductase] + O2 = lochnericine + oxidized [NADPH--hemoprotein reductase] + H2O + H(+). It functions in the pathway alkaloid biosynthesis. Functionally, component of the monoterpenoid indole alkaloids (MIAs, e.g. echitovenine, tabersonine, lochnericine, 19-hydroxytabersonine and horhammericine) biosynthetic pathway; MIAs are used in cancer treatment and other medical applications. Cytochrome P450 catalyzing the conversion of tabersonine to lochnericine. The protein is Tabersonine 6,7-epoxidase isoform 2 of Catharanthus roseus (Madagascar periwinkle).